Here is a 151-residue protein sequence, read N- to C-terminus: NPC intracellular cholesterol transporter 2 (151 aa).

The first 19 residues, Met-1–Ala-19, serve as a signal peptide directing secretion. Intrachain disulfides connect Cys-27-Cys-140, Cys-42-Cys-47, and Cys-93-Cys-99. Residue Asn-58 is glycosylated (N-linked (GlcNAc...) asparagine). Lys-116 bears the N6-acetyllysine mark. N-linked (GlcNAc...) asparagine glycosylation is present at Asn-135.

Belongs to the NPC2 family. In terms of assembly, interacts with NPC1 (via the second lumenal domain) in a cholestrol-dependent manner. Interacts with NUS1/NgBR, the interaction stabilizes NCP2 and regulates cholesterol trafficking. Interacts with DHDDS. Interacts with NEDD4L (via C2 domain). Interacts with NPC1L1. As to expression, detected in gallbladder bile. Detected in fibroblasts, kidney, liver, spleen, small intestine, placenta and testis (at protein level). Epididymis.

It localises to the secreted. The protein resides in the endoplasmic reticulum. The protein localises to the lysosome. It catalyses the reaction cholesterol(in) = cholesterol(out). Intracellular cholesterol transporter which acts in concert with NPC1 and plays an important role in the egress of cholesterol from the lysosomal compartment. Unesterified cholesterol that has been released from LDLs in the lumen of the late endosomes/lysosomes is transferred by NPC2 to the cholesterol-binding pocket in the N-terminal domain of NPC1. May bind and mobilize cholesterol that is associated with membranes. NPC2 binds cholesterol with a 1:1 stoichiometry. Can bind a variety of sterols, including lathosterol, desmosterol and the plant sterols stigmasterol and beta-sitosterol. The secreted form of NCP2 regulates biliary cholesterol secretion via stimulation of ABCG5/ABCG8-mediated cholesterol transport. The polypeptide is NPC intracellular cholesterol transporter 2 (Homo sapiens (Human)).